The primary structure comprises 96 residues: Large ribosomal subunit protein bL21 (96 aa).

The protein belongs to the bacterial ribosomal protein bL21 family. As to quaternary structure, part of the 50S ribosomal subunit. Contacts protein L20.

Functionally, this protein binds to 23S rRNA in the presence of protein L20. The protein is Large ribosomal subunit protein bL21 of Sulfurihydrogenibium sp. (strain YO3AOP1).